The chain runs to 113 residues: Nucleoid-associated protein EUBREC_0329 (113 aa).

Over residues 1–12 (MARRGGFPGGMP) the composition is skewed to gly residues. The interval 1-45 (MARRGGFPGGMPGNMNNLMKQAQKMQRQMEEAQKQLEDAEVTAKA) is disordered. Residues 27-37 (RQMEEAQKQLE) are compositionally biased toward basic and acidic residues.

Belongs to the YbaB/EbfC family. In terms of assembly, homodimer.

It is found in the cytoplasm. It localises to the nucleoid. Its function is as follows. Binds to DNA and alters its conformation. May be involved in regulation of gene expression, nucleoid organization and DNA protection. The sequence is that of Nucleoid-associated protein EUBREC_0329 from Agathobacter rectalis (strain ATCC 33656 / DSM 3377 / JCM 17463 / KCTC 5835 / VPI 0990) (Eubacterium rectale).